The primary structure comprises 181 residues: Acireductone dioxygenase (181 aa).

Residues 1–10 are compositionally biased toward acidic residues; it reads MRAYIYDEES. Residues 1-23 form a disordered region; the sequence is MRAYIYDEESQLSPQDEHESSQS. Residues H82, H84, E88, and H128 each coordinate Fe(2+). H82, H84, E88, and H128 together coordinate Ni(2+).

It belongs to the acireductone dioxygenase (ARD) family. Requires Fe(2+) as cofactor. It depends on Ni(2+) as a cofactor.

It localises to the cytoplasm. It is found in the nucleus. It catalyses the reaction 1,2-dihydroxy-5-(methylsulfanyl)pent-1-en-3-one + O2 = 4-methylsulfanyl-2-oxobutanoate + formate + 2 H(+). It carries out the reaction 1,2-dihydroxy-5-(methylsulfanyl)pent-1-en-3-one + O2 = 3-(methylsulfanyl)propanoate + CO + formate + 2 H(+). Its pathway is amino-acid biosynthesis; L-methionine biosynthesis via salvage pathway; L-methionine from S-methyl-5-thio-alpha-D-ribose 1-phosphate: step 5/6. Catalyzes 2 different reactions between oxygen and the acireductone 1,2-dihydroxy-3-keto-5-methylthiopentene (DHK-MTPene) depending upon the metal bound in the active site. Fe-containing acireductone dioxygenase (Fe-ARD) produces formate and 2-keto-4-methylthiobutyrate (KMTB), the alpha-ketoacid precursor of methionine in the methionine recycle pathway. Ni-containing acireductone dioxygenase (Ni-ARD) produces methylthiopropionate, carbon monoxide and formate, and does not lie on the methionine recycle pathway. This Puccinia graminis f. sp. tritici (strain CRL 75-36-700-3 / race SCCL) (Black stem rust fungus) protein is Acireductone dioxygenase.